Here is an 89-residue protein sequence, read N- to C-terminus: Small ribosomal subunit protein uS15 (89 aa).

It belongs to the universal ribosomal protein uS15 family. Part of the 30S ribosomal subunit. Forms a bridge to the 50S subunit in the 70S ribosome, contacting the 23S rRNA.

In terms of biological role, one of the primary rRNA binding proteins, it binds directly to 16S rRNA where it helps nucleate assembly of the platform of the 30S subunit by binding and bridging several RNA helices of the 16S rRNA. Its function is as follows. Forms an intersubunit bridge (bridge B4) with the 23S rRNA of the 50S subunit in the ribosome. The sequence is that of Small ribosomal subunit protein uS15 from Acidothermus cellulolyticus (strain ATCC 43068 / DSM 8971 / 11B).